We begin with the raw amino-acid sequence, 348 residues long: Protein RecA (348 aa).

Glycine 66–threonine 73 lines the ATP pocket.

The protein belongs to the RecA family.

It is found in the cytoplasm. In terms of biological role, can catalyze the hydrolysis of ATP in the presence of single-stranded DNA, the ATP-dependent uptake of single-stranded DNA by duplex DNA, and the ATP-dependent hybridization of homologous single-stranded DNAs. It interacts with LexA causing its activation and leading to its autocatalytic cleavage. The protein is Protein RecA of Burkholderia lata (strain ATCC 17760 / DSM 23089 / LMG 22485 / NCIMB 9086 / R18194 / 383).